We begin with the raw amino-acid sequence, 2699 residues long: UPF0648 protein C3H5.09c (2699 aa).

A glycan (N-linked (GlcNAc...) asparagine) is linked at Asn-21. A helical transmembrane segment spans residues 24-44 (FVWVVIATGFLFHLVLFVLSY). N-linked (GlcNAc...) asparagine glycans are attached at residues Asn-288, Asn-293, Asn-334, Asn-345, Asn-433, Asn-507, Asn-551, Asn-655, Asn-760, Asn-993, Asn-1000, Asn-1003, Asn-1006, and Asn-1009. The tract at residues 975–1021 (KAKDPSPKSASESSSFYQNGSDIDDNDSNSSNTSNHTTENANAQQRK) is disordered. The span at 981–995 (PKSASESSSFYQNGS) shows a compositional bias: low complexity. Residues 1006 to 1033 (NTSNHTTENANAQQRKLEDLNRSFEDFL) are a coiled coil. Over residues 1010–1019 (HTTENANAQQ) the composition is skewed to polar residues. N-linked (GlcNAc...) asparagine glycosylation is found at Asn-1026, Asn-1039, Asn-1046, Asn-1236, Asn-1255, Asn-1344, Asn-1527, Asn-1595, Asn-1791, Asn-1916, Asn-2032, Asn-2048, Asn-2256, Asn-2285, Asn-2388, Asn-2407, Asn-2417, Asn-2508, and Asn-2622. The stretch at 1758–1818 (QYELLQKRRK…TLSDHYRLLE (61 aa)) forms a coiled coil. Positions 2393–2447 (FPHIYSRNHDKRKENGSQGEADNSNYSGSLMRRRTNDQEEDALATPSSSRRDSRS) are disordered. Over residues 2408 to 2420 (GSQGEADNSNYSG) the composition is skewed to polar residues. Disordered regions lie at residues 2606 to 2632 (AEENQEEGSPASAISRNHSTRSSLNSP) and 2647 to 2676 (ADIVKRHIPPTINGKRSKNKGNEGSNARVD). The segment covering 2617 to 2632 (SAISRNHSTRSSLNSP) has biased composition (polar residues).

This sequence belongs to the UPF0648 family.

The protein resides in the membrane. In Schizosaccharomyces pombe (strain 972 / ATCC 24843) (Fission yeast), this protein is UPF0648 protein C3H5.09c.